Reading from the N-terminus, the 355-residue chain is Aromatic amino acid aminotransferase (355 aa).

An N6-(pyridoxal phosphate)lysine modification is found at K217.

The protein belongs to the class-II pyridoxal-phosphate-dependent aminotransferase family. As to quaternary structure, homodimer. The cofactor is pyridoxal 5'-phosphate.

It carries out the reaction an aromatic L-alpha-amino acid + 2-oxoglutarate = an aromatic oxo-acid + L-glutamate. Aminotransferase that catalyzes the conversion of aromatic amino acids and 2-oxoglutarate into corresponding aromatic oxo acids and L-glutamate. This chain is Aromatic amino acid aminotransferase, found in Mycobacterium avium (strain 104).